A 387-amino-acid chain; its full sequence is Flap endonuclease 1 (387 aa).

Positions 1-104 are N-domain; sequence MGILGLSKLI…GELAKRAERR (104 aa). D34 lines the Mg(2+) pocket. 2 residues coordinate DNA: R47 and R70. Residues D86, E158, E160, D179, and D181 each contribute to the Mg(2+) site. The interval 122–253 is I-domain; it reads GIEKFNRRLV…KRAIELINNY (132 aa). Residue E158 coordinates DNA. The DNA site is built by G231 and D233. Position 233 (D233) interacts with Mg(2+). An interaction with PCNA region spans residues 336-344; it reads TQVRLDSFF. Residues 345-387 form a disordered region; sequence KTLPSTPNATNAAKRKAEEAKKSANNKKAKTSGGGGGRGRRPK.

This sequence belongs to the XPG/RAD2 endonuclease family. FEN1 subfamily. As to quaternary structure, interacts with PCNA. Three molecules of FEN1 bind to one PCNA trimer with each molecule binding to one PCNA monomer. PCNA stimulates the nuclease activity without altering cleavage specificity. Requires Mg(2+) as cofactor. In terms of processing, phosphorylated. Phosphorylation upon DNA damage induces relocalization to the nuclear plasma.

It localises to the nucleus. The protein resides in the nucleolus. It is found in the nucleoplasm. The protein localises to the mitochondrion. Functionally, structure-specific nuclease with 5'-flap endonuclease and 5'-3' exonuclease activities involved in DNA replication and repair. During DNA replication, cleaves the 5'-overhanging flap structure that is generated by displacement synthesis when DNA polymerase encounters the 5'-end of a downstream Okazaki fragment. It enters the flap from the 5'-end and then tracks to cleave the flap base, leaving a nick for ligation. Also involved in the long patch base excision repair (LP-BER) pathway, by cleaving within the apurinic/apyrimidinic (AP) site-terminated flap. Acts as a genome stabilization factor that prevents flaps from equilibrating into structures that lead to duplications and deletions. Also possesses 5'-3' exonuclease activity on nicked or gapped double-stranded DNA, and exhibits RNase H activity. Also involved in replication and repair of rDNA and in repairing mitochondrial DNA. The polypeptide is Flap endonuclease 1 (Drosophila yakuba (Fruit fly)).